We begin with the raw amino-acid sequence, 290 residues long: S-methyl-5'-thioadenosine phosphorylase (290 aa).

Residues serine 11, 53 to 54, and 86 to 87 each bind phosphate; these read RH and SA. Methionine 184 provides a ligand contact to substrate. Threonine 185 provides a ligand contact to phosphate. 208–210 is a substrate binding site; the sequence is DYD.

It belongs to the PNP/MTAP phosphorylase family. MTAP subfamily. In terms of assembly, homohexamer. Dimer of a homotrimer.

The enzyme catalyses S-methyl-5'-thioadenosine + phosphate = 5-(methylsulfanyl)-alpha-D-ribose 1-phosphate + adenine. It functions in the pathway amino-acid biosynthesis; L-methionine biosynthesis via salvage pathway; S-methyl-5-thio-alpha-D-ribose 1-phosphate from S-methyl-5'-thioadenosine (phosphorylase route): step 1/1. Functionally, catalyzes the reversible phosphorylation of S-methyl-5'-thioadenosine (MTA) to adenine and 5-methylthioribose-1-phosphate. Involved in the breakdown of MTA, a major by-product of polyamine biosynthesis. Responsible for the first step in the methionine salvage pathway after MTA has been generated from S-adenosylmethionine. Has broad substrate specificity with 6-aminopurine nucleosides as preferred substrates. The sequence is that of S-methyl-5'-thioadenosine phosphorylase from Cereibacter sphaeroides (strain ATCC 17023 / DSM 158 / JCM 6121 / CCUG 31486 / LMG 2827 / NBRC 12203 / NCIMB 8253 / ATH 2.4.1.) (Rhodobacter sphaeroides).